We begin with the raw amino-acid sequence, 302 residues long: tRNA dimethylallyltransferase (302 aa).

9–16 (GPTAAGKS) serves as a coordination point for ATP. Position 11-16 (11-16 (TAAGKS)) interacts with substrate. The tract at residues 34–37 (DSRQ) is interaction with substrate tRNA.

The protein belongs to the IPP transferase family. Monomer. It depends on Mg(2+) as a cofactor.

The catalysed reaction is adenosine(37) in tRNA + dimethylallyl diphosphate = N(6)-dimethylallyladenosine(37) in tRNA + diphosphate. Its function is as follows. Catalyzes the transfer of a dimethylallyl group onto the adenine at position 37 in tRNAs that read codons beginning with uridine, leading to the formation of N6-(dimethylallyl)adenosine (i(6)A). The chain is tRNA dimethylallyltransferase from Gloeobacter violaceus (strain ATCC 29082 / PCC 7421).